The chain runs to 428 residues: Putative zinc finger protein 355P (428 aa).

Residues 1–64 (MRDEVAEKEK…KHPGLTQHNI (64 aa)) form the KRAB domain. C2H2-type zinc fingers lie at residues 72–94 (YKCK…QRIH), 100–122 (YKCE…MRAH), and 128–150 (YKCE…KRIH). A C2H2-type 4; degenerate zinc finger spans residues 156–178 (YKFEECDKAFYWVLSFTKHMIIH). Residues 184 to 206 (YKYQECGKAFKWSSNLTIHKRIH) form a C2H2-type 5; degenerate zinc finger. The C2H2-type 6; degenerate zinc finger occupies 212-234 (CKCEECGKACKQSLGLTIQKRIH). Residues 263-285 (YNCEKCGKAFYCSSNLIQNNIVH) form a C2H2-type 7; degenerate zinc finger. 2 consecutive C2H2-type zinc fingers follow at residues 291-313 (YKCQ…KIIH) and 335-357 (YKCE…MIVH). The segment at 363 to 385 (YKCEECGKAFKWSSELTIHQRIR) adopts a C2H2-type 10; degenerate zinc-finger fold. Residues 391–413 (YKCEECVRVFKHSSKLNEHKRNH) form a C2H2-type 11 zinc finger.

It belongs to the krueppel C2H2-type zinc-finger protein family.

The protein resides in the nucleus. In terms of biological role, may be involved in transcriptional regulation. In Homo sapiens (Human), this protein is Putative zinc finger protein 355P (ZNF355P).